The primary structure comprises 162 residues: Interleukin-15 (162 aa).

The first 29 residues, 1–29 (MRISKPHLRITSIQCYVCLLLNTHFLTEA), serve as a signal peptide directing secretion. A propeptide spanning residues 30-48 (GIRVFILGCISAGIPKTEA) is cleaved from the precursor. Intrachain disulfides connect C83–C133 and C90–C136. Residues N119, N127, and N143 are each glycosylated (N-linked (GlcNAc...) asparagine).

Belongs to the IL-15/IL-21 family.

The protein localises to the secreted. In terms of biological role, cytokine that plays a major role in the development of inflammatory and protective immune responses to microbial invaders and parasites by modulating immune cells of both the innate and adaptive immune systems. Stimulates the proliferation of natural killer cells, T-cells and B-cells and promotes the secretion of several cytokines. In monocytes, induces the production of IL8 and monocyte chemotactic protein 1/CCL2, two chemokines that attract neutrophils and monocytes respectively to sites of infection. Unlike most cytokines, which are secreted in soluble form, IL15 is expressed in association with its high affinity IL15RA on the surface of IL15-producing cells and delivers signals to target cells that express IL2RB and IL2RG receptor subunits. Binding to its receptor triggers the phosphorylation of JAK1 and JAK3 and the recruitment and subsequent phosphorylation of signal transducer and activator of transcription-3/STAT3 and STAT5. In mast cells, induces the rapid tyrosine phosphorylation of STAT6 and thereby controls mast cell survival and release of cytokines such as IL4. This is Interleukin-15 (IL15) from Marmota monax (Woodchuck).